The chain runs to 95 residues: Small ribosomal subunit protein bS18 (95 aa).

This sequence belongs to the bacterial ribosomal protein bS18 family. As to quaternary structure, part of the 30S ribosomal subunit. Forms a tight heterodimer with protein bS6.

Its function is as follows. Binds as a heterodimer with protein bS6 to the central domain of the 16S rRNA, where it helps stabilize the platform of the 30S subunit. This Rickettsia akari (strain Hartford) protein is Small ribosomal subunit protein bS18.